Reading from the N-terminus, the 577-residue chain is MADITDKTAEQLENLNIQDDQKQAATGSESQSVENSSASLYVGDLEPSVSEAHLYDIFSPIGSVSSIRVCRDAITKTSLGYAYVNFNDHEAGRKAIEQLNYTPIKGRLCRIMWSQRDPSLRKKGSGNIFIKNLHPDIDNKALYDTFSVFGDILSSKIATDENGKSKGFGFVHFEEEGAAKEAIDALNGMLLNGQEIYVAPHLSRKERDSQLEETKAHYTNLYVKNINSETTDEQFQELFAKFGPIVSASLEKDADGKLKGFGFVNYEKHEDAVKAVEALNDSELNGEKLYVGRAQKKNERMHVLKKQYEAYRLEKMAKYQGVNLFVKNLDDSVDDEKLEEEFAPYGTITSAKVMRTENGKSKGFGFVCFSTPEEATKAITEKNQQIVAGKPLYVAIAQRKDVRRSQLAQQIQARNQMRYQQATAAAAAAAAGMPGQFMPPMFYGVMPPRGVPFNGPNPQQMNPMGGMPKNGMPPQFRNGPVYGVPPQGGFPRNANDNNQFYQQKQRQALGEQLYKKVSAKTSNEEAAGKITGMILDLPPQEVFPLLESDELFEQHYKEASAAYESFKKEQEQQTEQA.

The span at 1–10 shows a compositional bias: basic and acidic residues; that stretch reads MADITDKTAE. The disordered stretch occupies residues 1 to 36; it reads MADITDKTAEQLENLNIQDDQKQAATGSESQSVENS. Position 2 is an N-acetylalanine (alanine 2). A Glycyl lysine isopeptide (Lys-Gly) (interchain with G-Cter in ubiquitin) cross-link involves residue lysine 7. The segment at 9 to 61 is required and sufficient for nuclear export; sequence AEQLENLNIQDDQKQAATGSESQSVENSSASLYVGDLEPSVSEAHLYDIFSPI. A compositionally biased stretch (polar residues) spans 11 to 27; sequence QLENLNIQDDQKQAATG. Residues 12 to 17 carry the Nuclear export signal motif; that stretch reads LENLNI. RRM domains are found at residues 38-116, 126-203, 219-296, and 322-399; these read ASLY…WSQR, GNIF…PHLS, TNLY…RAQK, and VNLF…IAQR. At arginine 107 the chain carries Omega-N-methylarginine. Serine 249 carries the phosphoserine modification. The interval 281-317 is required and sufficient for nuclear import; that stretch reads DSELNGEKLYVGRAQKKNERMHVLKKQYEAYRLEKMA. Residue serine 332 is modified to Phosphoserine. Lysine 337 participates in a covalent cross-link: Glycyl lysine isopeptide (Lys-Gly) (interchain with G-Cter in ubiquitin). Residue serine 405 is modified to Phosphoserine. The tract at residues 473 to 577 is interaction with SUP35; that stretch reads PPQFRNGPVY…KEQEQQTEQA (105 aa). The PABC domain occupies 489–568; that stretch reads GFPRNANDNN…ASAAYESFKK (80 aa).

Belongs to the polyadenylate-binding protein type-1 family. In terms of assembly, binds to poly(A) mRNA to form a periodic structure with a packing density of one molecule per 25 adenylate residues. Interacts with the nuclear export factor CRM1 and with the importin SXM1. Interacts with RNA15, a component of the cleavage factor IA (CFIA) complex. Interacts with translation initiation factor eIF4G (TIF4631 or TIF4632) and release factor eRF3 (SUP35). Interacts with the PAB-dependent poly(A)-nuclease (PAN) complex regulatory subunit PAN3. Interacts with ARF1, DCP1, PBP1, the Hsp70 chaperone SSA1, and TPA1. Interacts with PAT1 in an RNA-dependent manner.

The protein resides in the cytoplasm. The protein localises to the nucleus. Binds the poly(A) tail of mRNA. Appears to be an important mediator of the multiple roles of the poly(A) tail in mRNA biogenesis, stability and translation. In the nucleus, interacts with the nuclear cleavage factor IA (CFIA), which is required for both mRNA cleavage and polyadenylation. Is also required for efficient mRNA export to the cytoplasm. Acts in concert with a poly(A)-specific nuclease (PAN) to affect poly(A) tail shortening, which may occur concomitantly with either nucleocytoplasmic mRNA transport or translational initiation. Regulates PAN activity via interaction with the stimulator PAN3 or the inhibitor PBP1. In the cytoplasm, affects both translation and mRNA decay. Stimulates translation by interaction with translation initiation factor eIF4G, a subunit of the cap-binding complex eIF4F, bringing the 5'- and 3'-ends of the mRNA in proximity. The formation of this circular mRNP structure appears to be critical for the synergistic effects of the cap and the poly(A) tail in facilitating translation initiation, recycling of ribosomes, and mRNA stability. Also regulates translation termination by recruiting eukaryotic release factor 3 (eRF3). Interaction with eRF3 is also required for regulation of normal mRNA decay through translation termination-coupled poly(A) shortening, probably mediated by PAN. Loss of PAB1 from the mRNP after deadenylation triggers mRNA degradation. Inhibits the major cytoplasmic mRNA deadenylase CCR4-NOT complex. Is also associated peripherally with COPI vesicles through its interaction with ARF1, and this is required for correct localization of the asymmetrically distributed ASH1 mRNA. The chain is Polyadenylate-binding protein, cytoplasmic and nuclear (PAB1) from Saccharomyces cerevisiae (strain ATCC 204508 / S288c) (Baker's yeast).